We begin with the raw amino-acid sequence, 338 residues long: Large ribosomal subunit protein uL10 (338 aa).

The disordered stretch occupies residues Pro297–Gly338. Low complexity predominate over residues Ser298–Thr308. Over residues Ala309 to Ser325 the composition is skewed to basic and acidic residues.

Belongs to the universal ribosomal protein uL10 family. In terms of assembly, part of the 50S ribosomal subunit. Forms part of the ribosomal stalk which helps the ribosome interact with GTP-bound translation factors. Forms a heptameric L10(L12)2(L12)2(L12)2 complex, where L10 forms an elongated spine to which the L12 dimers bind in a sequential fashion.

Functionally, forms part of the ribosomal stalk, playing a central role in the interaction of the ribosome with GTP-bound translation factors. This chain is Large ribosomal subunit protein uL10, found in Saccharolobus islandicus (strain Y.N.15.51 / Yellowstone #2) (Sulfolobus islandicus).